The chain runs to 154 residues: Protein X (154 aa).

The tract at residues 68–117 (PCALRFTSARCMATTVNAHQILPKVLHKRTLGLPAMSTTDLEAYFKDCLF) is mitochondrial targeting sequence.

Belongs to the orthohepadnavirus protein X family. In terms of assembly, may form homodimer. May interact with host CEBPA, CFLAR, CREB1, DDB1, E4F1, HBXIP, HSPD1/HSP60, NFKBIA, POLR2E and SMAD4. Interacts with host SMC5-SMC6 complex and induces its degradation. Interacts with host TRPC4AP; leading to prevent ubiquitination of TRPC4AP. Interacts with host PLSCR1; this interaction promotes ubiquitination and degradation of HBx and impairs HBx-mediated cell proliferation. In terms of processing, a fraction may be phosphorylated in insect cells and HepG2 cells, a human hepatoblastoma cell line. Phosphorylated in vitro by host protein kinase C or mitogen-activated protein kinase. N-acetylated in insect cells.

The protein resides in the host cytoplasm. Its subcellular location is the host nucleus. It is found in the host mitochondrion. Functionally, multifunctional protein that plays a role in silencing host antiviral defenses and promoting viral transcription. Does not seem to be essential for HBV infection. May be directly involved in development of cirrhosis and liver cancer (hepatocellular carcinoma). Most of cytosolic activities involve modulation of cytosolic calcium. The effect on apoptosis is controversial depending on the cell types in which the studies have been conducted. May induce apoptosis by localizing in mitochondria and causing loss of mitochondrial membrane potential. May also modulate apoptosis by binding host CFLAR, a key regulator of the death-inducing signaling complex (DISC). Promotes viral transcription by using the host E3 ubiquitin ligase DDB1 to target the SMC5-SMC6 complex to proteasomal degradation. This host complex would otherwise bind to viral episomal DNA, and prevents its transcription. Moderately stimulates transcription of many different viral and cellular transcription elements. Promoters and enhancers stimulated by HBx contain DNA binding sites for NF-kappa-B, AP-1, AP-2, c-EBP, ATF/CREB, or the calcium-activated factor NF-AT. This chain is Protein X, found in Hepatitis B virus genotype A3 (isolate Cameroon/CMR983/1994) (HBV-A).